We begin with the raw amino-acid sequence, 589 residues long: Mini-chromosome maintenance complex-binding protein (589 aa).

The disordered stretch occupies residues 163-211 (VDEEMTDSMDSSTLEAGRNGSPFKKMKVGEATSSASESQVPQTSGIPPA). A compositionally biased stretch (polar residues) spans 193 to 207 (ATSSASESQVPQTSG).

It belongs to the MCMBP family. Interacts with the MCM complex.

Its subcellular location is the nucleus. Its function is as follows. Associated component of the MCM complex that acts as a regulator of DNA replication. Binds to the MCM complex during late S phase and may act by promoting the disassembly of the MCM complex from chromatin. Required for sister chromatid cohesion. This Arabidopsis thaliana (Mouse-ear cress) protein is Mini-chromosome maintenance complex-binding protein (ETG1).